Here is a 185-residue protein sequence, read N- to C-terminus: Ribosome-recycling factor (185 aa).

The protein belongs to the RRF family.

It localises to the cytoplasm. Its function is as follows. Responsible for the release of ribosomes from messenger RNA at the termination of protein biosynthesis. May increase the efficiency of translation by recycling ribosomes from one round of translation to another. In Halorhodospira halophila (strain DSM 244 / SL1) (Ectothiorhodospira halophila (strain DSM 244 / SL1)), this protein is Ribosome-recycling factor.